The sequence spans 273 residues: Cell wall mannoprotein 1 (273 aa).

An N-terminal signal peptide occupies residues 1-17; it reads MRFSAIFTLGLAGTALA. Residues 173 to 247 form a disordered region; it reads DVSDSAPSSS…GSASATSPPL (75 aa). Over residues 177–247 the composition is skewed to low complexity; it reads SAPSSSAGSS…GSASATSPPL (71 aa).

This sequence belongs to the cell wall mannoprotein 1 family. Post-translationally, galactomannoprotein, glycosylated.

It is found in the secreted. The protein localises to the cell wall. In terms of biological role, constitutive protein of the cell wall. Antigen target of host humoral immune response. This Aspergillus flavus protein is Cell wall mannoprotein 1.